Consider the following 277-residue polypeptide: Shikimate dehydrogenase (NADP(+)) (277 aa).

Residues 15-17 (SLS) and T62 contribute to the shikimate site. K66 functions as the Proton acceptor in the catalytic mechanism. Positions 87 and 102 each coordinate shikimate. NADP(+) contacts are provided by residues 127–131 (GAGGA), 151–156 (NRTVDK), and I219. Shikimate is bound at residue Y221. G242 serves as a coordination point for NADP(+).

The protein belongs to the shikimate dehydrogenase family. In terms of assembly, homodimer.

The enzyme catalyses shikimate + NADP(+) = 3-dehydroshikimate + NADPH + H(+). It functions in the pathway metabolic intermediate biosynthesis; chorismate biosynthesis; chorismate from D-erythrose 4-phosphate and phosphoenolpyruvate: step 4/7. Its function is as follows. Involved in the biosynthesis of the chorismate, which leads to the biosynthesis of aromatic amino acids. Catalyzes the reversible NADPH linked reduction of 3-dehydroshikimate (DHSA) to yield shikimate (SA). The polypeptide is Shikimate dehydrogenase (NADP(+)) (Bacillus cereus (strain AH820)).